The following is a 206-amino-acid chain: Threonine efflux protein (206 aa).

A helical membrane pass occupies residues 1–21 (MMMLFFTVAMVHIVALMSPGP). Residues 22–43 (DFFFVSQTAVSRSRKEAMMGVL) are Periplasmic-facing. A helical membrane pass occupies residues 44 to 64 (GITCGVMVWAGVALLGLHLII). Residues 65 to 66 (EK) lie on the Cytoplasmic side of the membrane. A helical membrane pass occupies residues 67–87 (MAWLHTIIMVGGGLYLCWMGY). Topologically, residues 88–149 (QMLRGALKKQ…VGDNVGAAAR (62 aa)) are periplasmic. A helical transmembrane segment spans residues 150 to 173 (WGIFALITLETLAWFTVVASLFAL). Residues 174–206 (PKMRRGYQRLAKWIDGFAGALFAGFGIHLIISR) lie on the Cytoplasmic side of the membrane.

It belongs to the Rht family.

It is found in the cell inner membrane. Functionally, conducts the efflux of threonine. This is Threonine efflux protein (rhtC) from Salmonella typhimurium (strain LT2 / SGSC1412 / ATCC 700720).